A 513-amino-acid polypeptide reads, in one-letter code: ATP synthase subunit alpha 1 (513 aa).

169–176 contributes to the ATP binding site; that stretch reads GDRQTGKT.

Belongs to the ATPase alpha/beta chains family. F-type ATPases have 2 components, CF(1) - the catalytic core - and CF(0) - the membrane proton channel. CF(1) has five subunits: alpha(3), beta(3), gamma(1), delta(1), epsilon(1). CF(0) has three main subunits: a(1), b(2) and c(9-12). The alpha and beta chains form an alternating ring which encloses part of the gamma chain. CF(1) is attached to CF(0) by a central stalk formed by the gamma and epsilon chains, while a peripheral stalk is formed by the delta and b chains.

It is found in the cell inner membrane. It catalyses the reaction ATP + H2O + 4 H(+)(in) = ADP + phosphate + 5 H(+)(out). Functionally, produces ATP from ADP in the presence of a proton gradient across the membrane. The alpha chain is a regulatory subunit. This Methylococcus capsulatus (strain ATCC 33009 / NCIMB 11132 / Bath) protein is ATP synthase subunit alpha 1.